We begin with the raw amino-acid sequence, 788 residues long: DNA ligase (788 aa).

NAD(+) contacts are provided by residues 35–39 (DAEYD), 84–85 (SL), and E124. Residue K126 is the N6-AMP-lysine intermediate of the active site. Positions 147, 184, 300, and 324 each coordinate NAD(+). Zn(2+)-binding residues include C418, C421, C448, and C454. One can recognise a BRCT domain in the interval 707 to 788 (AEGLPLAGQT…FIERLAQLGS (82 aa)).

The protein belongs to the NAD-dependent DNA ligase family. LigA subfamily. Mg(2+) serves as cofactor. Requires Mn(2+) as cofactor.

The enzyme catalyses NAD(+) + (deoxyribonucleotide)n-3'-hydroxyl + 5'-phospho-(deoxyribonucleotide)m = (deoxyribonucleotide)n+m + AMP + beta-nicotinamide D-nucleotide.. In terms of biological role, DNA ligase that catalyzes the formation of phosphodiester linkages between 5'-phosphoryl and 3'-hydroxyl groups in double-stranded DNA using NAD as a coenzyme and as the energy source for the reaction. It is essential for DNA replication and repair of damaged DNA. This Stutzerimonas stutzeri (strain A1501) (Pseudomonas stutzeri) protein is DNA ligase.